The chain runs to 357 residues: MAAAEVADTQLMLGVGLIEKDTNGEVLWVWCYPSTTATLRNLLLRKCCLTDENKLLHPFVFGQYRRTWFYITTIEVPDSSILKKVTHFSIVLTAKDFNPEKYAAFTRILCRMYLKHGSPVKMMESYIAVLTKGICQSEENGSFLSKDFDARKAYLAGSIKDIVSQFGMETVILHTALMLKKRIVVYHPKIEAVQEFTRTLPALVWHRQDWTILHSYVHLNADELEALQMCTGYVAGFVDLEVSNRPDLYDVFVNLAESEITIAPLAKEAMAMGKLHKEMGQLIVQSAEDPEKSESHVIQDIALKTREIFTNLAPFSEVSADGEKRVLNLEALKQKRFPPATENFLYHLAAAEQMLKI.

The region spanning 1–140 (MAAAEVADTQ…TKGICQSEEN (140 aa)) is the uDENN domain. The 135-residue stretch at 165–299 (QFGMETVILH…PEKSESHVIQ (135 aa)) folds into the cDENN domain. Positions 301 to 357 (IALKTREIFTNLAPFSEVSADGEKRVLNLEALKQKRFPPATENFLYHLAAAEQMLKI) constitute a dDENN domain.

It belongs to the DENND10 family. In terms of assembly, interacts with the coiled-coil heterodimer of CCDC22 and CCDC93; the interaction is direct. Interacts with RAB27A and RAB27B (GDP-bound forms preferentially).

Its subcellular location is the late endosome. Its function is as follows. Guanine nucleotide exchange factor (GEF) regulating homeostasis of late endocytic pathway, including endosomal positioning, maturation and secretion, possibly through activating Rab proteins such as RAB27A and RAB27B. Promotes the exchange of GDP to GTP, converting inactive GDP-bound RAB27A and RAB27B into their active GTP-bound form. This Homo sapiens (Human) protein is DENN domain-containing protein 10.